The chain runs to 379 residues: Presenilin-associated rhomboid-like protein, mitochondrial (379 aa).

The N-terminal 52 residues, M1–G52, are a transit peptide targeting the mitochondrion. Topologically, residues F53 to P101 are mitochondrial matrix. Residue S65 is modified to Phosphoserine. A Phosphothreonine modification is found at T69. The residue at position 70 (S70) is a Phosphoserine. The helical transmembrane segment at L102–Y121 threads the bilayer. The Mitochondrial intermembrane portion of the chain corresponds to E122 to R167. A helical membrane pass occupies residues T168–S187. Over L188–S207 the chain is Mitochondrial matrix. The helical transmembrane segment at P208–W230 threads the bilayer. Over S231 to Q244 the chain is Mitochondrial intermembrane. The helical transmembrane segment at F245–V262 threads the bilayer. Over G263–P272 the chain is Mitochondrial matrix. A helical membrane pass occupies residues S273–T289. The Nucleophile role is filled by S277. Residues K290–R295 lie on the Mitochondrial intermembrane side of the membrane. The chain crosses the membrane as a helical span at residues L296–M318. Residues D319–H332 are Mitochondrial matrix-facing. Residues A333 to W354 traverse the membrane as a helical segment. H335 is an active-site residue. Topologically, residues K355–K379 are mitochondrial intermembrane.

This sequence belongs to the peptidase S54 family. As to quaternary structure, interacts with PSEN1 and PSEN2. Binds OPA1. P-beta is proteolytically processed (beta-cleavage) in a PARL-dependent manner. The cleavage is inhibited when residues Ser-65, Thr-69 and Ser-70 are all phosphorylated.

The protein resides in the mitochondrion inner membrane. Its subcellular location is the nucleus. It catalyses the reaction Cleaves type-1 transmembrane domains using a catalytic dyad composed of serine and histidine that are contributed by different transmembrane domains.. Required for the control of apoptosis during postnatal growth. Essential for proteolytic processing of an antiapoptotic form of OPA1 which prevents the release of mitochondrial cytochrome c in response to intrinsic apoptotic signals. Required for the maturation of PINK1 into its 52kDa mature form after its cleavage by mitochondrial-processing peptidase (MPP). Promotes cleavage of serine/threonine-protein phosphatase PGAM5 in damaged mitochondria in response to loss of mitochondrial membrane potential. Mediates differential cleavage of PINK1 and PGAM5 depending on the health status of mitochondria, disassociating from PINK1 and associating with PGAM5 in response to mitochondrial membrane potential loss. Required for processing of CLPB into a form with higher protein disaggregase activity by removing an autoinhibitory N-terminal peptide. Promotes processing of DIABLO/SMAC in the mitochondrion which is required for DIABLO apoptotic activity. Also required for cleavage of STARD7 and TTC19. Promotes changes in mitochondria morphology regulated by phosphorylation of P-beta domain. This chain is Presenilin-associated rhomboid-like protein, mitochondrial (PARL), found in Homo sapiens (Human).